A 307-amino-acid polypeptide reads, in one-letter code: Oligopeptide transport ATP-binding protein OppF (307 aa).

The region spanning 6–251 (VEVKDLEISF…PIHPYTQSLL (246 aa)) is the ABC transporter domain. Residue 42–49 (GESGSGKT) coordinates ATP.

This sequence belongs to the ABC transporter superfamily. The complex is composed of two ATP-binding proteins (OppD and OppF), two transmembrane proteins (OppB and OppC) and a solute-binding protein (OppA).

It is found in the cell membrane. It carries out the reaction a [peptide](out) + ATP + H2O = a [peptide](in) + ADP + phosphate + H(+). Its function is as follows. Part of the ABC transporter complex OppABCDF involved in the uptake of oligopeptides. Probably responsible for energy coupling to the transport system. The chain is Oligopeptide transport ATP-binding protein OppF (oppF) from Streptococcus pyogenes serotype M1.